A 443-amino-acid polypeptide reads, in one-letter code: Cobyrinate a,c-diamide synthase (443 aa).

A GATase cobBQ-type domain is found at 244 to 435; the sequence is KVSVAMDSAF…AHIHFLSNPR (192 aa). The active-site Nucleophile is the Cys327.

It belongs to the CobB/CbiA family. Mg(2+) is required as a cofactor.

The catalysed reaction is cob(II)yrinate + 2 L-glutamine + 2 ATP + 2 H2O = cob(II)yrinate a,c diamide + 2 L-glutamate + 2 ADP + 2 phosphate + 2 H(+). Its pathway is cofactor biosynthesis; adenosylcobalamin biosynthesis; cob(II)yrinate a,c-diamide from sirohydrochlorin (anaerobic route): step 10/10. Functionally, catalyzes the ATP-dependent amidation of the two carboxylate groups at positions a and c of cobyrinate, using either L-glutamine or ammonia as the nitrogen source. This Thermoplasma acidophilum (strain ATCC 25905 / DSM 1728 / JCM 9062 / NBRC 15155 / AMRC-C165) protein is Cobyrinate a,c-diamide synthase.